Consider the following 475-residue polypeptide: L-ornithine N(5)-monooxygenase (475 aa).

Residues 65–73 (ERQPEFGWH) and Gln84 contribute to the FAD site. Lys89 is a binding site for substrate. Val150 contacts FAD. 238-241 (GGQS) serves as a coordination point for NADP(+). Substrate contacts are provided by residues 277-280 (NEIF) and Asn307. 307-309 (NYG) is a binding site for NADP(+). FAD is bound at residue 446–448 (SLL). Substrate is bound at residue Ser449.

The protein belongs to the lysine N(6)-hydroxylase/L-ornithine N(5)-oxygenase family. Homotetramer. Requires FAD as cofactor.

The enzyme catalyses L-ornithine + NADPH + O2 = N(5)-hydroxy-L-ornithine + NADP(+) + H2O. The catalysed reaction is L-ornithine + NADH + O2 = N(5)-hydroxy-L-ornithine + NAD(+) + H2O. The protein operates within siderophore biosynthesis. L-ornithine N(5)-monooxygenase; part of the gene cluster that mediates the biosynthesis of hydroxamate-containing siderophores that play a critical role in virulence via intracellular iron acquisition during macrophage infection. SID1 catalyzes the conversion of L-ornithine to N(5)-hydroxyornithine, the first step in the biosynthesis of all hydroxamate-containing siderophores. This is L-ornithine N(5)-monooxygenase from Ajellomyces capsulatus (Darling's disease fungus).